The primary structure comprises 258 residues: Malonyl-[acyl-carrier protein] O-methyltransferase (258 aa).

The protein belongs to the methyltransferase superfamily.

It catalyses the reaction malonyl-[ACP] + S-adenosyl-L-methionine = malonyl-[ACP] methyl ester + S-adenosyl-L-homocysteine. It participates in cofactor biosynthesis; biotin biosynthesis. In terms of biological role, converts the free carboxyl group of a malonyl-thioester to its methyl ester by transfer of a methyl group from S-adenosyl-L-methionine (SAM). It allows to synthesize pimeloyl-ACP via the fatty acid synthetic pathway. The sequence is that of Malonyl-[acyl-carrier protein] O-methyltransferase from Haemophilus ducreyi (strain 35000HP / ATCC 700724).